The following is a 754-amino-acid chain: 5-methyltetrahydropteroyltriglutamate--homocysteine methyltransferase (754 aa).

5-methyltetrahydropteroyltri-L-glutamate contacts are provided by residues 16-19 (RELK) and Lys-114. L-homocysteine-binding positions include 430–432 (IGS) and Glu-483. Residues 430-432 (IGS) and Glu-483 contribute to the L-methionine site. 5-methyltetrahydropteroyltri-L-glutamate-binding positions include 514–515 (RC) and Trp-560. L-homocysteine is bound at residue Asp-598. Position 598 (Asp-598) interacts with L-methionine. Glu-604 provides a ligand contact to 5-methyltetrahydropteroyltri-L-glutamate. Positions 640, 642, and 664 each coordinate Zn(2+). The active-site Proton donor is His-693. Position 725 (Cys-725) interacts with Zn(2+).

The protein belongs to the vitamin-B12 independent methionine synthase family. The cofactor is Zn(2+).

It catalyses the reaction 5-methyltetrahydropteroyltri-L-glutamate + L-homocysteine = tetrahydropteroyltri-L-glutamate + L-methionine. Its pathway is amino-acid biosynthesis; L-methionine biosynthesis via de novo pathway; L-methionine from L-homocysteine (MetE route): step 1/1. Catalyzes the transfer of a methyl group from 5-methyltetrahydrofolate to homocysteine resulting in methionine formation. The sequence is that of 5-methyltetrahydropteroyltriglutamate--homocysteine methyltransferase from Aeromonas salmonicida (strain A449).